The chain runs to 39 residues: Natriuretic peptide HsNP-a (39 aa).

A propeptide spanning residues 1 to 8 is cleaved from the precursor; that stretch reads SGSKTAKI. Cysteine 12 and cysteine 28 form a disulfide bridge.

Belongs to the natriuretic peptide family. As to expression, expressed by the venom gland.

The protein resides in the secreted. Its function is as follows. Snake venom natriuretic peptide that targets both NPR1 and NPR2. Exhibits hypotensive and vasodepressor activities. This chain is Natriuretic peptide HsNP-a, found in Hoplocephalus stephensii (Stephens's banded snake).